We begin with the raw amino-acid sequence, 163 residues long: Nucleotide-binding protein BcerKBAB4_1061 (163 aa).

This sequence belongs to the YajQ family.

Its function is as follows. Nucleotide-binding protein. This is Nucleotide-binding protein BcerKBAB4_1061 from Bacillus mycoides (strain KBAB4) (Bacillus weihenstephanensis).